The chain runs to 583 residues: MFMTQIVFGIAPTLLKTFSHLTALDLWRPSAPYVFDPVTSSTYLGTIADGVEEFLGIFYGQDTGGSNRFAPPKPYIPSRHSFINASTAGAACPQPYVPLPADPYTVLTNVSEDCLSLRIARPENTKSTAKLPVMVWLYGGGASVGTAYDVSYNPVGLIQQSVVNGSPVIYVAINYRVNLFGHAFSDALLKSKSTNLAMQDQRLGIEWIKNHISAFGGDPDNITLFGEDEGATYIALHILSNHEVPFHRAILQSGAAITHHDVNGNRSARNFAAVAARCNCLSDGDRQVDSQDTVDCLRRVPMEDLVNATFEVAHSVDPVNGFRAFMPAVDGYMIPDEPSNLLSRGQVPANISILAGWTRDESSMSVPTSIRTAADAASFISTQFPLLNASTIHHFLTSLYPESDFTTNSPSSPEKVTPAWRATSALHRDLTLTCPTIFQAWSLRLSSNCTTPVYLYELRQSPFATALNNSGVGYLGIVHFSDVPYVFNELERTYYITDPEENKLAQRMSASWTAFASGAFPLCERSERSLGRWEEAYGGDRVCRDRMPEHVRVKGIGDNGDQDDGDEIGKLMARCGFINRLEY.

The signal sequence occupies residues 1–23; sequence MFMTQIVFGIAPTLLKTFSHLTA. Asn-84, Asn-109, Asn-221, Asn-265, Asn-307, Asn-350, Asn-388, Asn-448, and Asn-468 each carry an N-linked (GlcNAc...) asparagine glycan.

Belongs to the type-B carboxylesterase/lipase family.

It participates in secondary metabolite biosynthesis. Its function is as follows. Inactive carboxylesterase-like protein; part of the gene cluster that mediates the biosynthesis of viriditoxin, one of the 'classical' secondary metabolites produced by fungi and that has antibacterial activity. The first step is performed by the polyketide synthase VdtA which condenses one acetyl-CoA and 6 malonyl-CoA units to form the heptaketide monomer backbone of viriditoxin. The product of VdtA is then O-methylated on C7 by the O-methyltransferase VdtC. The O-methyl group is important for the stereoselective coupling of the monomers at the final step of viriditoxin biosynthesis. The short-chain dehydrogenase/reductase VdtF then acts as a stereospecific reductase converting the pyrone to dihydropyrone via the reduction of the C3-C4 double bond. The FAD-binding monooxygenase VdtE then converts the ketone group into a methyl-ester group to yield semi-viriditoxin. Finally, the laccase VdtB is involved in dimerization of 2 semi-viriditoxin molecules to yield the final viriditoxin. VdtB is responsible for the regioselective 6,6'-coupling of semi-viriditoxin, which yields (M)-viriditoxin and (P)-viriditoxin at a ratio of 1:2. The non-catalytic carboxylesterase-like protein VdtD affects the stereochemistical outcome of the coupling. The highly reducing polyketide synthase VdtX is not involved in viriditoxin synthesis, but might possibly play a role in the production of additional metabolites not identified yet. This Byssochlamys spectabilis (Paecilomyces variotii) protein is Inactive carboxylesterase-like protein VdtD.